A 511-amino-acid polypeptide reads, in one-letter code: Probable eukaryotic translation initiation factor 4H (511 aa).

Disordered stretches follow at residues 25–63 (SWADDDFDLPTAPAAREESGSGLKRGDPGYFESLPDRGS) and 154–511 (TIRV…EVKI). The span at 39-51 (AREESGSGLKRGD) shows a compositional bias: basic and acidic residues. The region spanning 86 to 162 (FTAFIGNLSF…RTIRVNVAEA (77 aa)) is the RRM domain. The span at 179 to 196 (WRRSTPLASRESSSQPSR) shows a compositional bias: polar residues. Composition is skewed to basic and acidic residues over residues 230–247 (VRRDSSGPGHTREPRDPG) and 261–270 (LAEKVDRDVP). The segment covering 285-318 (LADTEQTWSRGTKLRTPTTTSRQSSADSTPSSGA) has biased composition (polar residues). Low complexity predominate over residues 331 to 349 (TAGSPSATANATPAAPASG). A Phosphoserine modification is found at serine 334. Composition is skewed to basic and acidic residues over residues 360 to 388 (AAREKAAEEKLAQREGERRKAREEAEKQK) and 394 to 419 (KPVEGEKLGWREEKLRSIKAAQDKVA). Positions 420 to 434 (GKPTTAPATTTNTGA) are enriched in low complexity. The segment covering 438-448 (GSADRAKKDEQ) has biased composition (basic and acidic residues). Residues 451 to 467 (EQVQPSRKSSQTGATSE) are compositionally biased toward polar residues. A compositionally biased stretch (basic and acidic residues) spans 502–511 (VTKGVEEVKI).

Its subcellular location is the cytoplasm. The protein localises to the P-body. Probable translation initiation factor. This Cryptococcus neoformans var. grubii serotype A (strain H99 / ATCC 208821 / CBS 10515 / FGSC 9487) (Filobasidiella neoformans var. grubii) protein is Probable eukaryotic translation initiation factor 4H.